The primary structure comprises 95 residues: Protein TusB (95 aa).

Belongs to the DsrH/TusB family. As to quaternary structure, heterohexamer, formed by a dimer of trimers. The hexameric TusBCD complex contains 2 copies each of TusB, TusC and TusD. The TusBCD complex interacts with TusE.

The protein localises to the cytoplasm. Its function is as follows. Part of a sulfur-relay system required for 2-thiolation of 5-methylaminomethyl-2-thiouridine (mnm(5)s(2)U) at tRNA wobble positions. This is Protein TusB from Escherichia fergusonii (strain ATCC 35469 / DSM 13698 / CCUG 18766 / IAM 14443 / JCM 21226 / LMG 7866 / NBRC 102419 / NCTC 12128 / CDC 0568-73).